Reading from the N-terminus, the 306-residue chain is Homeobox protein HMX3 (306 aa).

The segment at 95–181 is disordered; the sequence is HTPRTEVPDK…DKKPCRKKKT (87 aa). 2 stretches are compositionally biased toward basic and acidic residues: residues 117–143 and 153–174; these read GERD…KSPE and EEGK…PDKK. Positions 178-237 form a DNA-binding region, homeobox; sequence KKKTRTVFSRSQVFQLESTFDMKRYLSSSERAGLAASLHLTETQVKIWFQNRRNKWKRQL.

Belongs to the HMX homeobox family.

Its subcellular location is the nucleus. Its function is as follows. Transcription factor involved in specification of neuronal cell types and which is required for inner ear and hypothalamus development. Binds to the 5'-CAAGTG-3' core sequence. May act as a stage-specific inhibitor of anf1 in the anterior neural plate during the development. In Xenopus laevis (African clawed frog), this protein is Homeobox protein HMX3 (hmx3).